A 200-amino-acid chain; its full sequence is Protein Syd (200 aa).

This sequence belongs to the Syd family.

It localises to the cell inner membrane. Interacts with the SecY protein in vivo. May bind preferentially to an uncomplexed state of SecY, thus functioning either as a chelating agent for excess SecY in the cell or as a regulatory factor that negatively controls the translocase function. The sequence is that of Protein Syd from Colwellia psychrerythraea (strain 34H / ATCC BAA-681) (Vibrio psychroerythus).